The chain runs to 587 residues: Synaptotagmin-3 (587 aa).

Topologically, residues 1 to 54 (MSGDYEDDLCRRALILVSDLCARVRDADTNDRCQEFNELRIRGYPRGPDADISV) are vesicular. The tract at residues 10-34 (CRRALILVSDLCARVRDADTNDRCQ) is cysteine motif. Residues 55 to 75 (SLLSVIVTFCGIVLLGVSLFV) traverse the membrane as a helical segment. Over 76–587 (SWKLCWVPWR…KGLSEKENSE (512 aa)) the chain is Cytoplasmic. Low complexity predominate over residues 183–205 (PSQTSPELPSEGGTGSGLLLLPP). Residues 183–258 (PSQTSPELPS…EERPPALPLP (76 aa)) are disordered. Polar residues predominate over residues 213–224 (AQSHQQVTSLAP). Positions 229–244 (PALPRPLTQQTLTTQA) are enriched in low complexity. Residue Arg-286 is modified to Omega-N-methylarginine. C2 domains lie at 296–417 (PCGR…PLWR) and 428–562 (DLGE…EHWH). Residues Asp-327, Asp-333, Asp-385, Phe-386, Asp-387, Ser-390, Asp-393, Asp-459, Asp-465, Asp-519, and Asp-521 each coordinate Ca(2+).

This sequence belongs to the synaptotagmin family. Homodimer; disulfide-linked via the cysteine motif. Can also form heterodimers with SYT6, SYT9 and SYT10. Requires Ca(2+) as cofactor.

The protein resides in the cell membrane. It localises to the cytoplasmic vesicle. Its subcellular location is the secretory vesicle membrane. Functionally, ca(2+) sensor involved in Ca(2+)-dependent exocytosis of secretory vesicles through Ca(2+) and phospholipid binding to the C2 domain. Ca(2+) induces binding of the C2-domains to phospholipid membranes and to assembled SNARE-complexes; both actions contribute to triggering exocytosis. Plays a role in dendrite formation by melanocytes. The polypeptide is Synaptotagmin-3 (Syt3) (Mus musculus (Mouse)).